A 217-amino-acid polypeptide reads, in one-letter code: Large ribosomal subunit protein uL1 (217 aa).

Serine 2 is subject to N-acetylserine. Residue tyrosine 11 is modified to Phosphotyrosine. 2 positions are modified to N6-acetyllysine: lysine 91 and lysine 106. Lysine 118 is subject to N6-acetyllysine; alternate. Lysine 118 participates in a covalent cross-link: Glycyl lysine isopeptide (Lys-Gly) (interchain with G-Cter in SUMO1); alternate. Lysine 118 is covalently cross-linked (Glycyl lysine isopeptide (Lys-Gly) (interchain with G-Cter in SUMO2); alternate). A Glycyl lysine isopeptide (Lys-Gly) (interchain with G-Cter in SUMO2) cross-link involves residue lysine 161.

This sequence belongs to the universal ribosomal protein uL1 family. In terms of assembly, component of the large ribosomal subunit.

The protein resides in the cytoplasm. In terms of biological role, component of the large ribosomal subunit. The ribosome is a large ribonucleoprotein complex responsible for the synthesis of proteins in the cell. The polypeptide is Large ribosomal subunit protein uL1 (RPL10A) (Bos taurus (Bovine)).